A 218-amino-acid chain; its full sequence is Thiopurine S-methyltransferase (218 aa).

The S-adenosyl-L-methionine site is built by Trp10, Leu45, Glu66, and Arg123.

It belongs to the class I-like SAM-binding methyltransferase superfamily. TPMT family.

The protein resides in the cytoplasm. The catalysed reaction is S-adenosyl-L-methionine + a thiopurine = S-adenosyl-L-homocysteine + a thiopurine S-methylether.. The polypeptide is Thiopurine S-methyltransferase (Shewanella sp. (strain ANA-3)).